Consider the following 203-residue polypeptide: Ribonuclease HII (203 aa).

Residues 14–203 form the RNase H type-2 domain; the sequence is GVIAGVDEVG…ILNSTKRALL (190 aa). 3 residues coordinate a divalent metal cation: aspartate 20, glutamate 21, and aspartate 112.

The protein belongs to the RNase HII family. Mn(2+) is required as a cofactor. It depends on Mg(2+) as a cofactor.

It is found in the cytoplasm. The catalysed reaction is Endonucleolytic cleavage to 5'-phosphomonoester.. In terms of biological role, endonuclease that specifically degrades the RNA of RNA-DNA hybrids. In Wolbachia sp. subsp. Brugia malayi (strain TRS), this protein is Ribonuclease HII.